A 425-amino-acid polypeptide reads, in one-letter code: Serine--tRNA ligase (425 aa).

Residue 229–231 coordinates L-serine; that stretch reads TSE. Residues 259–261 and Val-275 each bind ATP; that span reads RKE. Glu-282 lines the L-serine pocket. 349 to 352 is an ATP binding site; that stretch reads EVTS. Residue Thr-384 participates in L-serine binding.

The protein belongs to the class-II aminoacyl-tRNA synthetase family. Type-1 seryl-tRNA synthetase subfamily. In terms of assembly, homodimer. The tRNA molecule binds across the dimer.

Its subcellular location is the cytoplasm. It catalyses the reaction tRNA(Ser) + L-serine + ATP = L-seryl-tRNA(Ser) + AMP + diphosphate + H(+). The enzyme catalyses tRNA(Sec) + L-serine + ATP = L-seryl-tRNA(Sec) + AMP + diphosphate + H(+). It functions in the pathway aminoacyl-tRNA biosynthesis; selenocysteinyl-tRNA(Sec) biosynthesis; L-seryl-tRNA(Sec) from L-serine and tRNA(Sec): step 1/1. Catalyzes the attachment of serine to tRNA(Ser). Is also able to aminoacylate tRNA(Sec) with serine, to form the misacylated tRNA L-seryl-tRNA(Sec), which will be further converted into selenocysteinyl-tRNA(Sec). The chain is Serine--tRNA ligase from Borrelia garinii subsp. bavariensis (strain ATCC BAA-2496 / DSM 23469 / PBi) (Borreliella bavariensis).